The sequence spans 197 residues: MRTGSITRKTEETDIAVSVNLDGTGTYKVDTGIGFLDHMIEQFSRHSLIDIECRVKGDLHVDQHHTTEDSAIALGQAISQALGDKKGITRYGHTYSPMDEALCRVALDISGRPVLVWKAAFTQPRLGEMDTELFEHWFQSISQAAGITLHIESLYGSNNHHIIEGIYKGFARAMRAAIAIDPRKADAVPSTKGILGG.

This sequence belongs to the imidazoleglycerol-phosphate dehydratase family.

The protein resides in the cytoplasm. It catalyses the reaction D-erythro-1-(imidazol-4-yl)glycerol 3-phosphate = 3-(imidazol-4-yl)-2-oxopropyl phosphate + H2O. It participates in amino-acid biosynthesis; L-histidine biosynthesis; L-histidine from 5-phospho-alpha-D-ribose 1-diphosphate: step 6/9. This chain is Imidazoleglycerol-phosphate dehydratase, found in Novosphingobium aromaticivorans (strain ATCC 700278 / DSM 12444 / CCUG 56034 / CIP 105152 / NBRC 16084 / F199).